Consider the following 207-residue polypeptide: Homeobox protein BarH-like 1 (207 aa).

The segment at residues 95–154 (GRRSRTVFTELQLMGLEKRFEKQKYLSTPDRIDLAESLGLSQLQVKTWYQNRRMKWKKIV) is a DNA-binding region (homeobox). A disordered region spans residues 157-207 (GGGLESPTKPKGRPKKNSIPSSEQLSEQERAKETEKPPESPGEPSERQQEE). The segment covering 183 to 207 (EQERAKETEKPPESPGEPSERQQEE) has biased composition (basic and acidic residues).

This sequence belongs to the BAR homeobox family. As to expression, expressed predominantly in the facial primordia, developing stomach, and proximal limbs.

The protein localises to the nucleus. In terms of biological role, transcription factor, which is involved in craniofacial development, in odontogenic region definition, and in stomach organogenesis. Binds to a regulatory module of the NCAM promoter. This is Homeobox protein BarH-like 1 (BARX1) from Gallus gallus (Chicken).